Consider the following 234-residue polypeptide: Orotidine 5'-phosphate decarboxylase (234 aa).

Substrate-binding positions include aspartate 10, lysine 32, aspartate 59–threonine 68, threonine 122, arginine 184, glutamine 193, glycine 213, and arginine 214. The Proton donor role is filled by lysine 61.

It belongs to the OMP decarboxylase family. Type 1 subfamily. Homodimer.

It catalyses the reaction orotidine 5'-phosphate + H(+) = UMP + CO2. It functions in the pathway pyrimidine metabolism; UMP biosynthesis via de novo pathway; UMP from orotate: step 2/2. In terms of biological role, catalyzes the decarboxylation of orotidine 5'-monophosphate (OMP) to uridine 5'-monophosphate (UMP). The sequence is that of Orotidine 5'-phosphate decarboxylase from Bacillus pumilus (strain SAFR-032).